Reading from the N-terminus, the 133-residue chain is Core atranone cluster (CAC) protein 11 (133 aa).

It functions in the pathway mycotoxin biosynthesis. Its function is as follows. Part of the core atranone cluster (CAC) which products are predicted to catalyze most or all steps of mycotoxin atranone synthesis, starting from geranylgeranyl pyrophosphate (GGPP). The initial cyclization of GGPP to dolabellane is probably performed by the terpene cyclase ATR13. The Baeyer-Villiger oxidation near the end of the atranone synthesis, which converts atranones D and E to atranones F and G is predicted to be catalyzed by the monooxygenase ATR8. Of the CAC's other predicted gene products, the reducing PKS ATR6 might synthesize a polyketide chain. This polyketide is probably transferred onto the atranone backbone by the polyketide transferase ATR5. Other predicted CAC products include 4 oxygenases (ATR2, ATR3, ATR4, and ATR14), 3 short-chain reductases (ATR7, ATR9, and ATR10), and a methyltransferase (ATR12). These may all be involved in the various steps of atranone biosynthesis, although their specific roles must await experimental determination. The protein is Core atranone cluster (CAC) protein 11 of Stachybotrys chlorohalonatus (strain IBT 40285).